The primary structure comprises 157 residues: Protein-export protein SecB (157 aa).

It belongs to the SecB family. As to quaternary structure, homotetramer, a dimer of dimers. One homotetramer interacts with 1 SecA dimer.

It is found in the cytoplasm. Functionally, one of the proteins required for the normal export of preproteins out of the cell cytoplasm. It is a molecular chaperone that binds to a subset of precursor proteins, maintaining them in a translocation-competent state. It also specifically binds to its receptor SecA. The sequence is that of Protein-export protein SecB from Photobacterium profundum (strain SS9).